Reading from the N-terminus, the 1369-residue chain is Neurofascin (1369 aa).

Positions 1–25 (MVLHSHQLTYAGIAFALCLHHLISA) are cleaved as a signal peptide. Residues 26–1235 (IEVPLDSNIQ…NHVDIATQGW (1210 aa)) are Extracellular-facing. Ig-like C2-type domains lie at 42–138 (PTIT…LQVS) and 144–231 (PKEK…NPYT). Cystine bridges form between Cys-64-Cys-119 and Cys-163-Cys-214. N-linked (GlcNAc...) asparagine glycans are attached at residues Asn-241, Asn-247, and Asn-323. Ig-like C2-type domains are found at residues 262 to 350 (PSFM…ISVR), 355 to 442 (PYWL…AFVS), 448 to 535 (PRIL…VRLE), and 539 to 626 (PTRI…AYLT). Intrachain disulfides connect Cys-286-Cys-334 and Cys-376-Cys-426. N-linked (GlcNAc...) asparagine glycosylation is found at Asn-427, Asn-464, and Asn-501. Disulfide bonds link Cys-470–Cys-519 and Cys-561–Cys-610. 4 Fibronectin type-III domains span residues 645–740 (RPRD…TSGA), 745–838 (NPTG…SGED), 843–945 (APTD…TPEG), and 949–1057 (SPRY…TPAS). Asn-692 carries an N-linked (GlcNAc...) asparagine glycan. Positions 730-739 (MPSERYQTSG) are enriched in polar residues. The disordered stretch occupies residues 730-753 (MPSERYQTSGARPEINPTGVQGAG). Asn-767, Asn-793, Asn-853, Asn-994, and Asn-1009 each carry an N-linked (GlcNAc...) asparagine glycan. Positions 1078 to 1097 (TTATPTTETPPTEIPTTAIP) are disordered. Asn-1133, Asn-1150, Asn-1156, and Asn-1171 each carry an N-linked (GlcNAc...) asparagine glycan. The 90-residue stretch at 1133 to 1222 (NGSSIWDIRA…SYITFTTSSA (90 aa)) folds into the Fibronectin type-III 5 domain. A helical membrane pass occupies residues 1236 to 1256 (FIGLMCAIALLVLILLIVCFI). The Cytoplasmic portion of the chain corresponds to 1257-1369 (KRSRGGKYPV…SPVNAIYSLA (113 aa)). Composition is skewed to basic and acidic residues over residues 1266–1282 (VRDN…KNVE) and 1289–1298 (RSLESDEDNK). Positions 1266 to 1369 (VRDNKDEHLN…SPVNAIYSLA (104 aa)) are disordered. The span at 1300-1313 (LPNSQTSLDGTIKQ) shows a compositional bias: polar residues.

It belongs to the immunoglobulin superfamily. L1/neurofascin/NgCAM family. N-glycosylated and O-glycosylated. In terms of processing, may be proteolytically cleaved at Arg-636.

Its subcellular location is the cell membrane. Cell adhesion, ankyrin-binding protein which may be involved in neurite extension, axonal guidance, synaptogenesis, myelination and neuron-glial cell interactions. In Gallus gallus (Chicken), this protein is Neurofascin (NFASC).